The primary structure comprises 87 residues: Large ribosomal subunit protein bL27 (87 aa).

The disordered stretch occupies residues 1-22 (MAHKKAGGSSRNGRDSQGQRRG).

This sequence belongs to the bacterial ribosomal protein bL27 family.

This Nitratidesulfovibrio vulgaris (strain DP4) (Desulfovibrio vulgaris) protein is Large ribosomal subunit protein bL27.